Consider the following 78-residue polypeptide: COP9 signalosome complex subunit 5b (78 aa).

This sequence belongs to the peptidase M67A family. CSN5 subfamily. In terms of assembly, component of the CSN complex, probably composed of CSN1, CSN2, CSN3, CSN4, CSN5 (CSN5A or CSN5B), CSN6 (CSN6A or CSN6B), CSN7 and CSN8. A divalent metal cation is required as a cofactor.

It localises to the cytoplasm. It is found in the nucleus. Its function is as follows. Probable protease subunit of the COP9 signalosome complex (CSN), a complex involved in various cellular and developmental processes such as photomorphogenesis and auxin and jasmonate responses. The CSN complex is an essential regulator of the ubiquitin (Ubl) conjugation pathway by mediating the deneddylation of the cullin subunits of the SCF-type E3 ligase complexes, leading to decrease the Ubl ligase activity of SCF. In the complex, it probably acts as the catalytic center that mediates the cleavage of Nedd8 from cullins. It however has no metalloprotease activity by itself and requires the other subunits of the CSN complex. The CSN complex is involved in repression of photomorphogenesis in darkness by regulating the activity of COP1-containing Ubl ligase complexes. The chain is COP9 signalosome complex subunit 5b (CSN5B) from Brassica oleracea (Wild cabbage).